A 659-amino-acid chain; its full sequence is Macrolide export ATP-binding/permease protein MacB (659 aa).

Residues 10–249 form the ABC transporter domain; the sequence is IELRGIRKRY…QPLLHHAGLS (240 aa). 47-54 contributes to the ATP binding site; sequence GSSGSGKS. A run of 4 helical transmembrane segments spans residues 287–307, 538–558, 594–614, and 619–639; these read SLTL…LAIG, LGLV…NVML, ITGG…LVFW, and VFSF…GLIF.

The protein belongs to the ABC transporter superfamily. Macrolide exporter (TC 3.A.1.122) family. Homodimer.

The protein localises to the cell inner membrane. Non-canonical ABC transporter that contains transmembrane domains (TMD), which form a pore in the inner membrane, and an ATP-binding domain (NBD), which is responsible for energy generation. Confers resistance against macrolides. This Nitrosomonas europaea (strain ATCC 19718 / CIP 103999 / KCTC 2705 / NBRC 14298) protein is Macrolide export ATP-binding/permease protein MacB.